The following is a 1008-amino-acid chain: Envelopment polyprotein (1008 aa).

Residues 1–17 (MVRTYLLLLLLCGPATP) form the signal peptide. Topologically, residues 18–394 (FFNHLMDVTR…NWANIHCFSK (377 aa)) are lumenal. 3 N-linked (GlcNAc...) asparagine; by host glycosylation sites follow: N34, N70, and N108. Intrachain disulfides connect C138–C269, C156–C166, C206–C247, C216–C226, C233–C238, C292–C295, C299–C368, and C319–C324. N208 carries N-linked (GlcNAc...) asparagine; by host glycosylation. The helical transmembrane segment at 395 to 415 (EQVLILVAVSSLCILLLASVL) threads the bilayer. Residues 416 to 496 (RALKVIATFT…VRQKMFNLTR (81 aa)) lie on the Cytoplasmic side of the membrane. The tract at residues 419-465 (KVIATFTWKIIKPFWWILSLLCRTCSKRLNKRAERLKESIHSLEEGL) is golgi retention signal. Residues 461-465 (LEEGL) form an important for correct targeting of the glycoproteins to the Golgi complex but not for heterodimerization region. The internal signal sequence for glycoprotein C stretch occupies residues 497 to 513 (LSPVVVGMLCLACPVES). 12 disulfide bridges follow: C514–C555, C527–C537, C580–C677, C595–C789, C601–C650, C607–C657, C612–C639, C643–C648, C728–C742, C758–C771, C851–C924, and C861–C864. The Lumenal segment spans residues 514–977 (CSDSISVTAS…GWFKASWLRA (464 aa)). Residues 601 to 607 (CHLMGAC) are fusion loop. The segment at 644-655 (GGALCQCFNMRP) is fusion loop. 2 N-linked (GlcNAc...) asparagine; by host glycosylation sites follow: N691 and N696. Residues N912 and N949 are each glycosylated (N-linked (GlcNAc...) asparagine; by host). A helical transmembrane segment spans residues 978–998 (IWAILGGTVSLIIGVVIIYMV). Over 999 to 1008 (FTLCLKVKKS) the chain is Cytoplasmic.

It belongs to the phlebovirus envelope glycoprotein family. Homodimer. Heterodimer with glycoprotein C. Homotrimer (postfusion). As to quaternary structure, heterodimer with glycoprotein N. Homotrimer (postfusion). In terms of processing, specific enzymatic cleavages in vivo yield mature proteins including glycoprotein C and glycoprotein N. Post-translationally, the cytoplasmic tail is Palmitoylated. Glycosylated. Contains principally poly-N-acetyllactosamine glycans. In terms of processing, glycosylated. Contains principally oligomannose-type glycans that can attach to host CD209/DC-SIGN. Post-translationally, palmitoylated.

Its subcellular location is the virion membrane. It localises to the host Golgi apparatus membrane. The protein localises to the host endoplasmic reticulum membrane. Functionally, structural component of the virion that interacts with glycoprotein C. It shields the hydrophobic fusion loops of the glycoprotein C, preventing premature fusion. The glycoprotein protrusions are arranged on an icosahedral lattice, with T=12 triangulation. They are able to attach the virion to the host cell receptor CD209/DC-SIGN and to promote fusion of membranes with the late endosome after endocytosis of the virion. Plays a role in the packaging of ribonucleoproteins during virus assembly. In terms of biological role, structural component of the virion that interacts with glycoprotein N. Acts as a class II fusion protein that is activated upon acidification and subsequent repositioning of the glycoprotein N. The glycoprotein protrusions are arranged on an icosahedral lattice, with T=12 triangulation. They are able to attach the virion to the host cell receptor CD209/DC-SIGN and to promote fusion of membranes with the late endosome after endocytosis of the virion. The sequence is that of Envelopment polyprotein (GP) from Homo sapiens (Human).